Here is a 499-residue protein sequence, read N- to C-terminus: Putative protein phosphatase 2C 76 (499 aa).

Residues 1–34 form the signal peptide; that stretch reads MRLGCSGRRRRLLRAALLRLVVLVLVAPPRRCAG. The interval 67–101 is disordered; the sequence is AGSGGEGDGDRRSSSSSPPPPPHPRGCHVAVDRGR. In terms of domain architecture, PPM-type phosphatase spans 92-457; that stretch reads GCHVAVDRGR…DNVAAVIVPL (366 aa). Mn(2+)-binding residues include Asp-138 and Gly-139. The interval 286–306 is disordered; sequence KKTSVVSGKRRRKRNSNNRDD. Positions 397 and 448 each coordinate Mn(2+).

It belongs to the PP2C family. Requires Mg(2+) as cofactor. The cofactor is Mn(2+).

The enzyme catalyses O-phospho-L-seryl-[protein] + H2O = L-seryl-[protein] + phosphate. It carries out the reaction O-phospho-L-threonyl-[protein] + H2O = L-threonyl-[protein] + phosphate. This chain is Putative protein phosphatase 2C 76, found in Oryza sativa subsp. japonica (Rice).